We begin with the raw amino-acid sequence, 432 residues long: Adenylosuccinate synthetase (432 aa).

Residues 13–19 and 41–43 each bind GTP; these read GDEGKGK and GHT. The active-site Proton acceptor is aspartate 14. Residues aspartate 14 and glycine 41 each coordinate Mg(2+). Residues 14–17, 39–42, threonine 130, arginine 144, glutamine 225, threonine 240, and arginine 304 contribute to the IMP site; these read DEGK and NAGH. Histidine 42 serves as the catalytic Proton donor. 300-306 provides a ligand contact to substrate; the sequence is AVTGRPR. GTP contacts are provided by residues arginine 306, 332–334, and 415–417; these read KLD and STG.

This sequence belongs to the adenylosuccinate synthetase family. In terms of assembly, homodimer. The cofactor is Mg(2+).

The protein localises to the cytoplasm. It catalyses the reaction IMP + L-aspartate + GTP = N(6)-(1,2-dicarboxyethyl)-AMP + GDP + phosphate + 2 H(+). It participates in purine metabolism; AMP biosynthesis via de novo pathway; AMP from IMP: step 1/2. Plays an important role in the de novo pathway of purine nucleotide biosynthesis. Catalyzes the first committed step in the biosynthesis of AMP from IMP. The sequence is that of Adenylosuccinate synthetase from Haemophilus influenzae (strain 86-028NP).